Here is a 99-residue protein sequence, read N- to C-terminus: Acylphosphatase (99 aa).

Residues 10-99 (RLTAFVHGHV…PRGVEGFTER (90 aa)) enclose the Acylphosphatase-like domain. Catalysis depends on residues Arg25 and Asn43.

This sequence belongs to the acylphosphatase family.

The enzyme catalyses an acyl phosphate + H2O = a carboxylate + phosphate + H(+). The polypeptide is Acylphosphatase (acyP) (Corynebacterium efficiens (strain DSM 44549 / YS-314 / AJ 12310 / JCM 11189 / NBRC 100395)).